Here is a 60-residue protein sequence, read N- to C-terminus: Large ribosomal subunit protein uL30 (60 aa).

The protein belongs to the universal ribosomal protein uL30 family. Part of the 50S ribosomal subunit.

This chain is Large ribosomal subunit protein uL30, found in Azoarcus sp. (strain BH72).